Here is a 353-residue protein sequence, read N- to C-terminus: Rhodopsin (353 aa).

The Extracellular portion of the chain corresponds to 1 to 36 (MNGTEGPYFYVPMVNTSGIVRSPYEYPQYYLVNPAA). 2 N-linked (GlcNAc...) asparagine glycosylation sites follow: N2 and N15. Residues 37 to 61 (YAALGAYMFLLILVGFPINFLTLYV) traverse the membrane as a helical segment. Residues 62–73 (TIEHKKLRTPLN) lie on the Cytoplasmic side of the membrane. Residues 74–96 (YILLNLAVADLFMVFGGFTTTMY) traverse the membrane as a helical segment. At 97–110 (TSMHGYFVLGRLGC) the chain is on the extracellular side. An intrachain disulfide couples C110 to C187. Residues 111-133 (NIEGFFATLGGEIALWSLVVLAI) form a helical membrane-spanning segment. Positions 134–136 (ERW) match the 'Ionic lock' involved in activated form stabilization motif. Residues 134–152 (ERWVVVCKPISNFRFGENH) lie on the Cytoplasmic side of the membrane. The helical transmembrane segment at 153-173 (AIMGLAFTWLMAMACAAPPLV) threads the bilayer. The Extracellular portion of the chain corresponds to 174 to 202 (GWSRYIPEGMQCSCGIDYYTRAEGFNNES). The N-linked (GlcNAc...) asparagine glycan is linked to N200. The helical transmembrane segment at 203-224 (FVIYMFVCHFLIPLMVVFFCYG) threads the bilayer. The Cytoplasmic segment spans residues 225–252 (RLLCAVKEAAAAQQESETTQRAEREVTR). The chain crosses the membrane as a helical span at residues 253-274 (MVVIMVIAFLICWCPYAGVAWW). At 275-286 (IFTHQGSDFGPV) the chain is on the extracellular side. The helical transmembrane segment at 287 to 308 (FMTIPAFFAKSSSIYNPMIYIC) threads the bilayer. N6-(retinylidene)lysine is present on K296. At 309–353 (LNKQFRHCMITTLCCGKNPFEEEEGASTASKTEASSVSSSSVSPA) the chain is on the cytoplasmic side. Residues C322 and C323 are each lipidated (S-palmitoyl cysteine). Residues 331–353 (EEGASTASKTEASSVSSSSVSPA) form a disordered region. Over residues 334 to 353 (ASTASKTEASSVSSSSVSPA) the composition is skewed to low complexity.

Belongs to the G-protein coupled receptor 1 family. Opsin subfamily. Phosphorylated on some or all of the serine and threonine residues present in the C-terminal region. Post-translationally, contains one covalently linked retinal chromophore.

It localises to the membrane. Its subcellular location is the cell projection. The protein localises to the cilium. It is found in the photoreceptor outer segment. Its function is as follows. Photoreceptor required for image-forming vision at low light intensity. While most salt water fish species use retinal as chromophore, most freshwater fish use 3-dehydroretinal, or a mixture of retinal and 3-dehydroretinal. Light-induced isomerization of 11-cis to all-trans retinal triggers a conformational change that activates signaling via G-proteins. Subsequent receptor phosphorylation mediates displacement of the bound G-protein alpha subunit by arrestin and terminates signaling. The protein is Rhodopsin (rho) of Lithognathus mormyrus (Striped seabream).